Consider the following 283-residue polypeptide: Acetyl-coenzyme A carboxylase carboxyl transferase subunit beta (283 aa).

The region spanning leucine 29–tyrosine 283 is the CoA carboxyltransferase N-terminal domain. Zn(2+) contacts are provided by cysteine 33, cysteine 36, cysteine 51, and cysteine 54. The C4-type zinc-finger motif lies at cysteine 33–cysteine 54.

This sequence belongs to the AccD/PCCB family. As to quaternary structure, acetyl-CoA carboxylase is a heterohexamer composed of biotin carboxyl carrier protein (AccB), biotin carboxylase (AccC) and two subunits each of ACCase subunit alpha (AccA) and ACCase subunit beta (AccD). It depends on Zn(2+) as a cofactor.

The protein resides in the cytoplasm. The enzyme catalyses N(6)-carboxybiotinyl-L-lysyl-[protein] + acetyl-CoA = N(6)-biotinyl-L-lysyl-[protein] + malonyl-CoA. The protein operates within lipid metabolism; malonyl-CoA biosynthesis; malonyl-CoA from acetyl-CoA: step 1/1. Component of the acetyl coenzyme A carboxylase (ACC) complex. Biotin carboxylase (BC) catalyzes the carboxylation of biotin on its carrier protein (BCCP) and then the CO(2) group is transferred by the transcarboxylase to acetyl-CoA to form malonyl-CoA. In Latilactobacillus sakei subsp. sakei (strain 23K) (Lactobacillus sakei subsp. sakei), this protein is Acetyl-coenzyme A carboxylase carboxyl transferase subunit beta.